Consider the following 72-residue polypeptide: Protein kish-A (72 aa).

The N-terminal stretch at 1–26 (MSAIFNFQSLLTVILLLICTCAYIRS) is a signal peptide. The Extracellular portion of the chain corresponds to 27-53 (LAPSLLDKNKSGLLGIFWKCARIGERK). N35 is a glycosylation site (N-linked (GlcNAc...) asparagine). Residues 54–71 (SPYVAVCCVVMAFSILFM) form a helical membrane-spanning segment. Position 72 (Q72) is a topological domain, cytoplasmic.

The protein belongs to the KISH family.

It localises to the golgi apparatus membrane. In terms of biological role, involved in the early part of the secretory pathway. The polypeptide is Protein kish-A (TMEM167A) (Taeniopygia guttata (Zebra finch)).